A 20-amino-acid polypeptide reads, in one-letter code: Antiviral protein Y3 (20 aa).

The polypeptide is Antiviral protein Y3 (Pleurotus citrinopileatus (Golden oyster mushroom)).